A 353-amino-acid polypeptide reads, in one-letter code: Chorismate synthase (353 aa).

Arginine 48 serves as a coordination point for NADP(+). FMN-binding positions include 125-127 (RSS), 238-239 (NA), glycine 278, 293-297 (KPTSS), and arginine 319.

Belongs to the chorismate synthase family. In terms of assembly, homotetramer. FMNH2 serves as cofactor.

The enzyme catalyses 5-O-(1-carboxyvinyl)-3-phosphoshikimate = chorismate + phosphate. It participates in metabolic intermediate biosynthesis; chorismate biosynthesis; chorismate from D-erythrose 4-phosphate and phosphoenolpyruvate: step 7/7. Functionally, catalyzes the anti-1,4-elimination of the C-3 phosphate and the C-6 proR hydrogen from 5-enolpyruvylshikimate-3-phosphate (EPSP) to yield chorismate, which is the branch point compound that serves as the starting substrate for the three terminal pathways of aromatic amino acid biosynthesis. This reaction introduces a second double bond into the aromatic ring system. The protein is Chorismate synthase of Buchnera aphidicola subsp. Cinara cedri (strain Cc).